The following is a 323-amino-acid chain: Methionyl-tRNA formyltransferase (323 aa).

115 to 118 (SLLP) serves as a coordination point for (6S)-5,6,7,8-tetrahydrofolate.

The protein belongs to the Fmt family.

The catalysed reaction is L-methionyl-tRNA(fMet) + (6R)-10-formyltetrahydrofolate = N-formyl-L-methionyl-tRNA(fMet) + (6S)-5,6,7,8-tetrahydrofolate + H(+). In terms of biological role, attaches a formyl group to the free amino group of methionyl-tRNA(fMet). The formyl group appears to play a dual role in the initiator identity of N-formylmethionyl-tRNA by promoting its recognition by IF2 and preventing the misappropriation of this tRNA by the elongation apparatus. The chain is Methionyl-tRNA formyltransferase from Lactococcus lactis subsp. cremoris (strain MG1363).